Here is an 81-residue protein sequence, read N- to C-terminus: Cortexin-2 (81 aa).

The chain crosses the membrane as a helical span at residues 29 to 49 (TGFAFVGILCIFLGLLIIRCF).

This sequence belongs to the cortexin family.

The protein resides in the membrane. The polypeptide is Cortexin-2 (Ctxn2) (Mus musculus (Mouse)).